The chain runs to 37 residues: Cytochrome b6-f complex subunit 5 (37 aa).

A helical membrane pass occupies residues 5 to 25 (LLSGIVLGLIVVTLAGLFYAA).

The protein belongs to the PetG family. In terms of assembly, the 4 large subunits of the cytochrome b6-f complex are cytochrome b6, subunit IV (17 kDa polypeptide, PetD), cytochrome f and the Rieske protein, while the 4 small subunits are PetG, PetL, PetM and PetN. The complex functions as a dimer.

The protein localises to the cellular thylakoid membrane. Component of the cytochrome b6-f complex, which mediates electron transfer between photosystem II (PSII) and photosystem I (PSI), cyclic electron flow around PSI, and state transitions. PetG is required for either the stability or assembly of the cytochrome b6-f complex. In Anabaena variabilis, this protein is Cytochrome b6-f complex subunit 5.